The sequence spans 132 residues: MQRITITIDDDLMAALDRMIEIKGYQNRSEALRDLARTGLQQASLEEGQMEACVGVLSYTYDHSARDLSKKLTNTHHDHHNISVASMHVHLDHDRCLEVSILKGKTDDVRHFADHVKAERHVTHGTLAVLPL.

Positions 77, 88, 90, and 96 each coordinate Ni(2+).

This sequence belongs to the transcriptional regulatory CopG/NikR family. Ni(2+) serves as cofactor.

In terms of biological role, transcriptional regulator. The sequence is that of Putative nickel-responsive regulator from Brucella abortus (strain S19).